We begin with the raw amino-acid sequence, 531 residues long: Glucose-6-phosphate exchanger SLC37A1 (531 aa).

Residues 18-38 (QWYRAFIFMLTFLLYASFHLS) traverse the membrane as a helical segment. The tract at residues 53-72 (CTAGDGPESPFSDPSSSTRH) is disordered. The next 11 membrane-spanning stretches (helical) occupy residues 100–120 (GALD…SGII), 129–149 (YLTF…LGYF), 157–177 (FYVV…PSVV), 192–214 (IMGI…AGYW), 222–242 (SFIV…LFLI), 332–352 (LCLL…PLYI), 364–384 (GELS…AGVI), 392–412 (ASTC…FSSV), 419–439 (ATIA…ALIT), 464–484 (AIID…AGLI), and 488–508 (GWSN…LFLV).

The protein belongs to the major facilitator superfamily. Organophosphate:Pi antiporter (OPA) (TC 2.A.1.4) family.

The protein resides in the endoplasmic reticulum membrane. It carries out the reaction D-glucose 6-phosphate(in) + phosphate(out) = D-glucose 6-phosphate(out) + phosphate(in). Inhibited by vanadate but not by chlorogenic acid. In terms of biological role, inorganic phosphate and glucose-6-phosphate antiporter. May transport cytoplasmic glucose-6-phosphate into the lumen of the endoplasmic reticulum and translocate inorganic phosphate into the opposite direction. Independent of a lumenal glucose-6-phosphatase. May not play a role in homeostatic regulation of blood glucose levels. The protein is Glucose-6-phosphate exchanger SLC37A1 of Mus musculus (Mouse).